We begin with the raw amino-acid sequence, 218 residues long: MADVSAKIVKDLRDKTGAGMMDCKKALAESDGDMVKASEWLRQKGIASAEKKSSRIAAEGAIGTYIHTGARVGVLLELNCETDFVARGDLFQGLLKDVAMQVAACPNVEYVSTEEIPVDVVEKEKSIEMGRDDLSGKPEQIKAKIVEGRIGKRLKELVLLEQPFIRDSSMTVAELVKQVAGKIGENIKVRRFTRYTLGEGIEVDQTDFATEVASMKTA.

The interval 82–85 is involved in Mg(2+) ion dislocation from EF-Tu; that stretch reads TDFV.

This sequence belongs to the EF-Ts family.

It is found in the cytoplasm. Its function is as follows. Associates with the EF-Tu.GDP complex and induces the exchange of GDP to GTP. It remains bound to the aminoacyl-tRNA.EF-Tu.GTP complex up to the GTP hydrolysis stage on the ribosome. The chain is Elongation factor Ts from Prochlorococcus marinus (strain MIT 9313).